Here is a 314-residue protein sequence, read N- to C-terminus: Probable tRNA pseudouridine synthase B (314 aa).

Basic residues predominate over residues 1 to 10 (MATRGRHRSR). The disordered stretch occupies residues 1–30 (MATRGRHRSRTSGTSSEPMTLRAPPDERDL). Asp-72 functions as the Nucleophile in the catalytic mechanism. Residues 237 to 314 (LPRVTIAPSA…LVVELDRMLV (78 aa)) form the PUA domain.

This sequence belongs to the pseudouridine synthase TruB family. Type 2 subfamily.

The enzyme catalyses uridine(55) in tRNA = pseudouridine(55) in tRNA. In terms of biological role, could be responsible for synthesis of pseudouridine from uracil-55 in the psi GC loop of transfer RNAs. This is Probable tRNA pseudouridine synthase B from Haloarcula marismortui (strain ATCC 43049 / DSM 3752 / JCM 8966 / VKM B-1809) (Halobacterium marismortui).